We begin with the raw amino-acid sequence, 500 residues long: ATP synthase subunit alpha (500 aa).

Glycine 169–threonine 176 is an ATP binding site.

The protein belongs to the ATPase alpha/beta chains family. As to quaternary structure, F-type ATPases have 2 components, CF(1) - the catalytic core - and CF(0) - the membrane proton channel. CF(1) has five subunits: alpha(3), beta(3), gamma(1), delta(1), epsilon(1). CF(0) has three main subunits: a(1), b(2) and c(9-12). The alpha and beta chains form an alternating ring which encloses part of the gamma chain. CF(1) is attached to CF(0) by a central stalk formed by the gamma and epsilon chains, while a peripheral stalk is formed by the delta and b chains.

Its subcellular location is the cell membrane. It carries out the reaction ATP + H2O + 4 H(+)(in) = ADP + phosphate + 5 H(+)(out). In terms of biological role, produces ATP from ADP in the presence of a proton gradient across the membrane. The alpha chain is a regulatory subunit. The polypeptide is ATP synthase subunit alpha (Clostridioides difficile (strain 630) (Peptoclostridium difficile)).